The sequence spans 1181 residues: Protein P1-P2 (1181 aa).

Positions 1 to 33 (MASFLKPVNSQGLWLSLLLAITYLFLLPSAGQS) are cleaved as a signal peptide. A run of 4 helical transmembrane segments spans residues 172–192 (LIEFVLVSWSLWLCSVLVYVA), 194–214 (AVPGKFLLYMAAFCTTFWAWP), 218–235 (ASSLIRIVTTPLTLIGFL), and 240–260 (IGLISHCLALTWNMFMTWSLL). In terms of domain architecture, Peptidase S39 spans 318-515 (IPGVQIKKLR…SSSPKFTGCE (198 aa)). Catalysis depends on for protease activity residues H366, D396, and S465. Residues 572–688 (GLWADDTEDD…SCESSPHRPT (117 aa)) are disordered. 2 stretches are compositionally biased toward basic and acidic residues: residues 598 to 608 (GETKSSEDPLP) and 638 to 648 (EESRQPQEEKG). The segment covering 649–677 (QSCQEDSLNSTQEIQGQSTHFVPSSGTGR) has biased composition (polar residues). In terms of domain architecture, RdRp catalytic spans 979–1094 (RYLTPTDCSG…SVGSDLSQYA (116 aa)).

This sequence belongs to the luteoviruses RNA polymerase family. Specific enzymatic cleavages in vivo yield mature proteins. The protease probably cleaves itself and releases the RdRp (Potential). Cleavages have been shown in the P1 protein, but since the N-terminus containing the serine protease is shared between P1 and P1-P2, cleavages should also occur within the P1-P2 protein.

The protein resides in the membrane. It carries out the reaction RNA(n) + a ribonucleoside 5'-triphosphate = RNA(n+1) + diphosphate. Its function is as follows. RNA-dependent RNA polymerase that plays an essential role in virus replication. In Cicer arietinum (Chickpea), this protein is Protein P1-P2.